The following is a 571-amino-acid chain: MQTNLSQLIKVARGETEADLVLLNARVINVFNAEIEQANVAVFDGKIAGVGDYRHGKEVIDLKGAYLLPGLINGHTHVESSMLDIAQYARAVVSHGTLALITDLHEISNVCGKEGIDYVLDASADLPLSIFLQVPSCVPATHLETAGAEINSQDVADLLRLPNVTGLGEMMNFPGVLFGVPSVLDKIIAAAGKVLDGHAPGLSGKDLNAYISAGIHSDHECIHLAEAKEKLARGMYIMIREGSSEKNLAELLPLVTDQTYKRCLFVVDDRSCADLKSDGDIDAVVRKAIRLGLDPVRAIQLASINTAEYFHLQGHGAIAPGYLANMIVCQNLEQLDIDMVFHKGKLVAEKGQALFKPQSRIPKSLLNSIHIRPFDTKDLILKTIQPQIPVIEVIPGQIVTRRLDLKIPAENGVIKANTELDLLKIVVMERHHQSGNMGHGLIRGFGLKKGAIASSVAHDSHNVVAVGTNDADLYTAIKELERINGGIALAVDGQVTASVSLPVAGLLSTKPLEEVVTELEEINNQVAKLGCKLSAPFATLSFMALPVIPELRLTDLGLVDVKTFKLIPQET.

Belongs to the metallo-dependent hydrolases superfamily. Adenine deaminase family. Requires Mn(2+) as cofactor.

It carries out the reaction adenine + H2O + H(+) = hypoxanthine + NH4(+). This is Adenine deaminase from Dehalococcoides mccartyi (strain CBDB1).